The sequence spans 111 residues: uncharacterized protein (111 aa).

A helical transmembrane segment spans residues Thr60–Phe80.

The protein localises to the mitochondrion membrane. This is an uncharacterized protein from Arabidopsis thaliana (Mouse-ear cress).